The sequence spans 300 residues: 4-hydroxy-tetrahydrodipicolinate synthase (300 aa).

Position 49 (threonine 49) interacts with pyruvate. Residue tyrosine 137 is the Proton donor/acceptor of the active site. Lysine 165 (schiff-base intermediate with substrate) is an active-site residue. Isoleucine 207 contributes to the pyruvate binding site.

Belongs to the DapA family. As to quaternary structure, homotetramer; dimer of dimers.

The protein resides in the cytoplasm. It carries out the reaction L-aspartate 4-semialdehyde + pyruvate = (2S,4S)-4-hydroxy-2,3,4,5-tetrahydrodipicolinate + H2O + H(+). It functions in the pathway amino-acid biosynthesis; L-lysine biosynthesis via DAP pathway; (S)-tetrahydrodipicolinate from L-aspartate: step 3/4. In terms of biological role, catalyzes the condensation of (S)-aspartate-beta-semialdehyde [(S)-ASA] and pyruvate to 4-hydroxy-tetrahydrodipicolinate (HTPA). The sequence is that of 4-hydroxy-tetrahydrodipicolinate synthase from Nitrosospira multiformis (strain ATCC 25196 / NCIMB 11849 / C 71).